We begin with the raw amino-acid sequence, 396 residues long: MQNMVILGATGSIGASTLSVMVNNPADFHVYGLVANASVQKMLALCITHQPEYAHMVDENAAMELKSLLPNHCVTQVTTGAEALNALVTDSRTDTVMAAIVGAAGLVPTFDAVKAGKRVLLANKEALVMSGELFMHTARASGATVLPVDSEHNAIFQCLPTNVQAQLGYCDLSANGISHILLTGSGGPFLNTDLATLSAMTPAQACNHPNWSMGPKISVDSATMMNKGLEFIEARWLFNTQAEQLKVVIHPQSVIHSMVQYRDGSVIAQMGNPDMRTPIAHCMSYPQRIGAGVEPLDFFKVGQLSFCEPDFDRFPCLRLAMQACEQGQEATTVLNAANEIAVDSFLKGRIRFTDIANVNYRCLDSVQQTRLDSIEDILQLDEQARATAVSVISTLN.

NADPH contacts are provided by T10, G11, S12, I13, and N123. K124 is a 1-deoxy-D-xylulose 5-phosphate binding site. NADPH is bound at residue E125. D149 lines the Mn(2+) pocket. Residues S150, E151, S185, and H208 each coordinate 1-deoxy-D-xylulose 5-phosphate. E151 lines the Mn(2+) pocket. G214 is a binding site for NADPH. Positions 221, 226, 227, and 230 each coordinate 1-deoxy-D-xylulose 5-phosphate. Residue E230 coordinates Mn(2+).

Belongs to the DXR family. Mg(2+) serves as cofactor. The cofactor is Mn(2+).

It carries out the reaction 2-C-methyl-D-erythritol 4-phosphate + NADP(+) = 1-deoxy-D-xylulose 5-phosphate + NADPH + H(+). The protein operates within isoprenoid biosynthesis; isopentenyl diphosphate biosynthesis via DXP pathway; isopentenyl diphosphate from 1-deoxy-D-xylulose 5-phosphate: step 1/6. Its function is as follows. Catalyzes the NADPH-dependent rearrangement and reduction of 1-deoxy-D-xylulose-5-phosphate (DXP) to 2-C-methyl-D-erythritol 4-phosphate (MEP). This Shewanella frigidimarina (strain NCIMB 400) protein is 1-deoxy-D-xylulose 5-phosphate reductoisomerase.